Here is a 198-residue protein sequence, read N- to C-terminus: N-acetyltransferase 9-like protein (198 aa).

One can recognise an N-acetyltransferase domain in the interval 14–186 (IILVPYKEKH…SNNFTNLTAD (173 aa)).

The protein belongs to the acetyltransferase family. GNAT subfamily.

This is N-acetyltransferase 9-like protein (nat9) from Nematostella vectensis (Starlet sea anemone).